A 172-amino-acid polypeptide reads, in one-letter code: Myosin regulatory light polypeptide 9 (172 aa).

Over residues 1 to 16 (MSSKRAKAKTTKKRPQ) the composition is skewed to basic residues. The interval 1 to 20 (MSSKRAKAKTTKKRPQRATS) is disordered. Ser2 is subject to N-acetylserine. At Thr19 the chain carries Phosphothreonine; by MLCK, CIT and ROCK2. Phosphoserine; by CDC42BP, CIT, MLCK, PAK1, ROCK1, ROCK2, DAPK1, DAPK2 and ZIPK/DAPK3 is present on Ser20. 3 EF-hand domains span residues 29-64 (SQIQEFKEAFNMIDQNRDGFIDKEDLHDMLASLGKN), 98-133 (DPEDVIRNAFACFDEEASGFIHEDHLRELLTTMGDR), and 134-169 (FTDEEVDEMYREAPIDKKGNFNYVEFTRILKHGAKD). Asp42, Asn44, Asp46, and Asp53 together coordinate Ca(2+).

In terms of assembly, myosin is a hexamer of 2 heavy chains and 4 light chains: interacts with myosin heavy chain MYO19. Interacts with LUZP1; the interaction results in inhibition of phosphorylation of MYL9 by DAPK3. Post-translationally, phosphorylation increases the actin-activated myosin ATPase activity and thereby regulates the contractile activity. It is required to generate the driving force in the migration of the cells but not necessary for localization of myosin-2 at the leading edge. Phosphorylation is required for myotube formation. Phosphorylated by DAPK3; DAPK3-mediated phosphorylation is inhibited by LUZP1. Smooth muscle tissues and in some, but not all, nonmuscle cells.

Its subcellular location is the cytoplasm. The protein localises to the cytoskeleton. It is found in the cell cortex. Its function is as follows. Myosin regulatory subunit that plays an important role in regulation of both smooth muscle and nonmuscle cell contractile activity via its phosphorylation. Implicated in cytokinesis, receptor capping, and cell locomotion. In myoblasts, may regulate PIEZO1-dependent cortical actomyosin assembly involved in myotube formation. In Homo sapiens (Human), this protein is Myosin regulatory light polypeptide 9 (MYL9).